Consider the following 375-residue polypeptide: 23S rRNA (uracil(747)-C(5))-methyltransferase RlmC (375 aa).

Cys3, Cys11, Cys14, and Cys87 together coordinate [4Fe-4S] cluster. The S-adenosyl-L-methionine site is built by Gln212, Phe241, Glu262, and Asn307. Catalysis depends on Cys334, which acts as the Nucleophile.

Belongs to the class I-like SAM-binding methyltransferase superfamily. RNA M5U methyltransferase family. RlmC subfamily.

It catalyses the reaction uridine(747) in 23S rRNA + S-adenosyl-L-methionine = 5-methyluridine(747) in 23S rRNA + S-adenosyl-L-homocysteine + H(+). Functionally, catalyzes the formation of 5-methyl-uridine at position 747 (m5U747) in 23S rRNA. This chain is 23S rRNA (uracil(747)-C(5))-methyltransferase RlmC, found in Shigella sonnei (strain Ss046).